Consider the following 328-residue polypeptide: D-cysteine desulfhydrase (328 aa).

Lys51 is subject to N6-(pyridoxal phosphate)lysine.

It belongs to the ACC deaminase/D-cysteine desulfhydrase family. As to quaternary structure, homodimer. Pyridoxal 5'-phosphate is required as a cofactor.

It carries out the reaction D-cysteine + H2O = hydrogen sulfide + pyruvate + NH4(+) + H(+). Catalyzes the alpha,beta-elimination reaction of D-cysteine and of several D-cysteine derivatives. It could be a defense mechanism against D-cysteine. The sequence is that of D-cysteine desulfhydrase from Escherichia fergusonii (strain ATCC 35469 / DSM 13698 / CCUG 18766 / IAM 14443 / JCM 21226 / LMG 7866 / NBRC 102419 / NCTC 12128 / CDC 0568-73).